A 351-amino-acid polypeptide reads, in one-letter code: 3-ketosteroid-9-alpha-monooxygenase, ferredoxin reductase component (351 aa).

The region spanning 10–116 is the FAD-binding FR-type domain; sequence SRSVILTVSA…LPPAGVFTPK (107 aa). The 2Fe-2S ferredoxin-type domain maps to 264-351; sequence ATVEVELDGE…PVTDHLKIEF (88 aa). 4 residues coordinate [2Fe-2S] cluster: cysteine 300, cysteine 305, cysteine 308, and cysteine 338.

As to quaternary structure, the two-component system 3-ketosteroid-9-alpha-monooxygenase is composed of an oxygenase component KshA and a reductase component KshB. FAD serves as cofactor. [2Fe-2S] cluster is required as a cofactor.

The enzyme catalyses androsta-1,4-diene-3,17-dione + 2 reduced [2Fe-2S]-[ferredoxin] + O2 + 2 H(+) = 9alpha-hydroxyandrosta-1,4-diene-3,17-dione + 2 oxidized [2Fe-2S]-[ferredoxin] + H2O. The protein operates within steroid metabolism; cholesterol degradation. KSH activity is completely inhibited by zinc ions. KshB is specifically inhibited by Cu(2+) ions. Probably involved in the degradation of cholesterol. In vitro, catalyzes the introduction of a 9alpha-hydroxyl moiety into the ring B of 3-ketosteroid substrates such as 1,4-androstadiene-3,17-dione (ADD), 4-androstene-3,17-dione (AD), 4-androstene-17beta-ol-3-one (testosterone), 4-pregnene-3,20-dione (progesterone), 19-nor-4-androstene-3,17-dione (nordion), 1-(5alpha)-androstene-3,17-dione, 5alpha-androstane-3,17-dione and 5beta-androstane-3,17-dione. KSH has the highest activity with 3-keto-Delta4 steroid substrates. The chain is 3-ketosteroid-9-alpha-monooxygenase, ferredoxin reductase component from Rhodococcus rhodochrous.